The primary structure comprises 180 residues: MLKPSDKWSWYFDKPSGRLMLDLGDRYLFQTNLSDKLLVDCAFSYNDFTVDDASAFQTFKECLSSLDLSEYRRDELTLYCVAAKRFHKPVQPKSWFFHSTGSDYQPSEGELVQLQNGLNQGLFIVLEAGDNASLVSCVELEGFMLSGSKSLSYGEAIKVMHDRMSTAARMNTLMPMALVG.

The protein belongs to the ZapC family. As to quaternary structure, interacts directly with FtsZ.

It localises to the cytoplasm. Its function is as follows. Contributes to the efficiency of the cell division process by stabilizing the polymeric form of the cell division protein FtsZ. Acts by promoting interactions between FtsZ protofilaments and suppressing the GTPase activity of FtsZ. The sequence is that of Cell division protein ZapC from Vibrio vulnificus (strain CMCP6).